The chain runs to 30 residues: Trypsin inhibitor 3 (30 aa).

Gln-1 is modified (pyrrolidone carboxylic acid). Disulfide bonds link Cys-4-Cys-21, Cys-11-Cys-23, and Cys-17-Cys-29.

Its subcellular location is the secreted. Inhibits trypsin; probably participates in a plant defense mechanism. The protein is Trypsin inhibitor 3 of Momordica cochinchinensis (Spiny bitter cucumber).